The chain runs to 338 residues: Ornithine carbamoyltransferase (338 aa).

N-acetylserine is present on Ser-2. Carbamoyl phosphate-binding positions include 67 to 70 (STRT), Arg-118, His-145, and Gln-148. L-ornithine contacts are provided by Asn-185, Asp-249, Ser-253, and Met-254. The active-site Proton acceptor is Cys-289. Carbamoyl phosphate-binding positions include 289–290 (CL) and Arg-316.

It belongs to the aspartate/ornithine carbamoyltransferase superfamily. OTCase family. Interacts with CAR1.

It is found in the cytoplasm. It catalyses the reaction carbamoyl phosphate + L-ornithine = L-citrulline + phosphate + H(+). Its pathway is amino-acid biosynthesis; L-arginine biosynthesis; L-arginine from L-ornithine and carbamoyl phosphate: step 1/3. Its activity is regulated as follows. Forms a stable complex with CAR1 in the presence of ornithine and arginine. In this complex CAR1 retains activity, but ARG3 activity is inhibited. This is Ornithine carbamoyltransferase (ARG3) from Saccharomyces cerevisiae (strain ATCC 204508 / S288c) (Baker's yeast).